The following is a 498-amino-acid chain: ADP,ATP carrier protein 1 (498 aa).

The Cytoplasmic portion of the chain corresponds to 1-33 (MSTSKSENYLSELRKIIWPIEQHENKKFLPLAF). The helical transmembrane segment at 34-54 (MMFCILLNYSTLRSIKDGFVV) threads the bilayer. Cys37 and Cys85 are disulfide-bonded. Topologically, residues 55 to 67 (TDIGTESISFLKT) are extracellular. Residues 68–88 (YIVLPSAVIAMVIYVKLCDIL) form a helical membrane-spanning segment. Topologically, residues 89–92 (KQEN) are cytoplasmic. A helical membrane pass occupies residues 93–113 (IFYVITSFFLGYFALFAFVLY). Topologically, residues 114 to 147 (PYPDLVHPDHKTIESLSLAYPNFKWFIKIVGKWS) are extracellular. The chain crosses the membrane as a helical span at residues 148-168 (FASFYTIAELWGTMMLSLLFW). Topologically, residues 169–184 (QFANQITKITEAKRFY) are cytoplasmic. A helical membrane pass occupies residues 185-205 (SMFGLLANLALPVTSVVIGYF). Residues 206–218 (LHEKTQIVSEHLK) are Extracellular-facing. Residues 219–239 (FIPLFVIMITSSFLIILTYRW) form a helical membrane-spanning segment. Topologically, residues 240–279 (MNKNVLTDPRLYDPTLVKEKKAKAKLSFIESFKMIFTSKY) are cytoplasmic. Residues 280–300 (VGYIALLIIAYGVSVNLVEGV) form a helical membrane-spanning segment. Over 301–320 (WKSKVKELYPTKEAYTIYMG) the chain is Extracellular. The chain crosses the membrane as a helical span at residues 321–341 (QFQFYQGWVAIAFMLIGSNIL). At 342 to 348 (RKVSWLT) the chain is on the cytoplasmic side. The chain crosses the membrane as a helical span at residues 349–369 (AAMITPLMMFITGAAFFSFIF). The Extracellular portion of the chain corresponds to 370 to 379 (FDSVIAMNLT). Residues 380 to 400 (GILASSPLTLAVMFGMIQNVL) form a helical membrane-spanning segment. The Cytoplasmic portion of the chain corresponds to 401-438 (SKGVKYSLFDATKNMAYIPLDKDLRVKGQAAVEVIGGR). Position 436–442 (436–442 (GGRLGKS)) interacts with ATP. The chain crosses the membrane as a helical span at residues 439–459 (LGKSGGAIIQSTFFILFPAFG). Residues 460–465 (FIEATP) lie on the Extracellular side of the membrane. Residues 466-486 (YFASIFFIIVILWIFAVKGLN) form a helical membrane-spanning segment. The Cytoplasmic portion of the chain corresponds to 487–498 (KEYQVLVNKNEN).

This sequence belongs to the ADP/ATP translocase tlc family.

It is found in the cell membrane. Provides the rickettsial cell with host ATP in exchange for rickettsial ADP. This is an obligate exchange system. This energy acquiring activity is an important component of rickettsial parasitism. This is ADP,ATP carrier protein 1 (tlcA) from Rickettsia typhi (strain ATCC VR-144 / Wilmington).